The primary structure comprises 88 residues: uncharacterized protein (88 aa).

The first 23 residues, 1–23 (MAVSGLRLTIVWGLLVLILTCQA), serve as a signal peptide directing secretion. Residues 25–40 (DKPEGKPDEQPHDSGK) show a composition bias toward basic and acidic residues. A disordered region spans residues 25-45 (DKPEGKPDEQPHDSGKNSEPA).

It localises to the secreted. This is an uncharacterized protein from Bos taurus (Bovine).